The sequence spans 724 residues: NAD(+) hydrolase SARM1 (724 aa).

Residues 1–27 (MVLTLLFSAYKLCRFFTMSGPRPGADR) constitute a mitochondrion transit peptide. Residues 24 to 56 (GADRLTVPGPDRSGGASPWWAAGGRGSREVSPG) are disordered. The segment covering 36 to 45 (SGGASPWWAA) has biased composition (low complexity). The ARM 1 repeat unit spans residues 60-100 (EVQGALERSLPELQQALSELKQASAARAVGAGLAEVFQLVE). Residues Trp-103, Arg-110, 149–157 (EQILVAENR), and 190–193 (HMFK) contribute to the NAD(+) site. ARM repeat units follow at residues 114–153 (QGLC…QILV), 155–193 (ENRD…HMFK), 196–235 (EETC…NCAL), 237–280 (GGQT…LATN), 281–314 (KEVE…CLVD), 315–354 (ASDT…AEAA), and 359–402 (QGKT…EEVP). 2 consecutive SAM domains span residues 412–476 (WKEA…LKTF) and 486–548 (NLAD…MLHS). A phosphoserine mark is found at Ser-548 and Ser-558. The TIR domain maps to 560–703 (DTPDVFISYR…KIIRFLQGRP (144 aa)). NAD(+) contacts are provided by residues 569–570 (RR) and Glu-599. The active site involves Glu-642. The segment covering 703–716 (PSQDSSAGSDTSLE) has biased composition (polar residues). A disordered region spans residues 703–724 (PSQDSSAGSDTSLEGATPMGLP).

This sequence belongs to the SARM1 family. In terms of assembly, homooctamer; forms an octameric ring via SAM domains. Interacts with TICAM1/TRIF and thereby interferes with TICAM1/TRIF function. Interacts with SDC2 (via cytoplasmic domain) and MAPK10/JNK3. In terms of processing, phosphorylation at Ser-548 by JNK kinases (MAPK8, MAPK9 and /or MAPK10) enhance the NAD(+) hydrolase (NADase) activity. Phosphorylation at Ser-548 and subsequent activation takes place in response to oxidative stress conditions and inhibits mitochondrial respiration. As to expression, widely expressed in the brain and neurons (at protein level). Expressed in photoreceptor cells of the neural retina.

Its subcellular location is the cytoplasm. It localises to the cell projection. The protein localises to the axon. The protein resides in the dendrite. It is found in the synapse. Its subcellular location is the mitochondrion. The catalysed reaction is NAD(+) + H2O = ADP-D-ribose + nicotinamide + H(+). The enzyme catalyses NAD(+) = cyclic ADP-beta-D-ribose + nicotinamide + H(+). It carries out the reaction NADP(+) + H2O = ADP-D-ribose 2'-phosphate + nicotinamide + H(+). Autoinhibited: in the inactive state, the enzymatic TIR domain is held apart by the autoinhibiting ARM repeats. NAD(+)-binding to ARM repeats maintains an inactive state by promoting interaction between ARM repeats and the TIR domain, thereby facilitating inhibition of the enzymatic TIR domain. Following activation, possibly by nicotinamide mononucleotide (NMN), auto-inhibitory interactions are released, allowing self-association of the TIR domains and subsequent activation of the NAD(+) hydrolase (NADase) activity. Self-association of TIR domains is facilitated by the octamer of SAM domains. In terms of biological role, NAD(+) hydrolase, which plays a key role in axonal degeneration following injury by regulating NAD(+) metabolism. Acts as a negative regulator of MYD88- and TRIF-dependent toll-like receptor signaling pathway by promoting Wallerian degeneration, an injury-induced form of programmed subcellular death which involves degeneration of an axon distal to the injury site. Wallerian degeneration is triggered by NAD(+) depletion: in response to injury, SARM1 is activated and catalyzes cleavage of NAD(+) into ADP-D-ribose (ADPR), cyclic ADPR (cADPR) and nicotinamide; NAD(+) cleavage promoting cytoskeletal degradation and axon destruction. Also able to hydrolyze NADP(+), but not other NAD(+)-related molecules. Can activate neuronal cell death in response to stress. Regulates dendritic arborization through the MAPK4-JNK pathway. Involved in innate immune response: inhibits both TICAM1/TRIF- and MYD88-dependent activation of JUN/AP-1, TRIF-dependent activation of NF-kappa-B and IRF3, and the phosphorylation of MAPK14/p38. This chain is NAD(+) hydrolase SARM1, found in Mus musculus (Mouse).